The primary structure comprises 177 residues: Iron-sulfur cluster assembly protein SufA (177 aa).

The signal sequence occupies residues Met1–Ala18. Residues Cys101, Cys169, and Cys171 each coordinate [4Fe-4S] cluster.

Belongs to the HesB/IscA family. As to quaternary structure, homodimer. Homotetramer formation is observed in vitro.

It localises to the plastid. The protein localises to the apicoplast. It participates in cofactor biosynthesis; iron-sulfur cluster biosynthesis. Participates in the sulfur mobilization (SUF) pathway for iron-sulfur (Fe-S) cluster biogenesis. Involved in the pre-assembly of [4Fe-4S] clusters and their transfer to target proteins. This Plasmodium falciparum (isolate 3D7) protein is Iron-sulfur cluster assembly protein SufA.